The following is a 464-amino-acid chain: Serine protease PepD (464 aa).

A disordered region spans residues 1–71 (MAKLARVVGL…TQYRQPYEAL (71 aa)). At 1-100 (MAKLARVVGL…GMVRQRPRAG (100 aa)) the chain is on the cytoplasmic side. The segment covering 39-48 (QGQQQTYSQQ) has biased composition (low complexity). Residues 101–121 (MLAIGAVTIAVVSAGIGGAAA) traverse the membrane as a helical segment. Topologically, residues 122 to 464 (SLVGFNRAPA…VQVTLGKAEQ (343 aa)) are periplasmic. Residues His-197, Asp-236, and Ser-317 each act as charge relay system in the active site. Positions 368 to 449 (LISTGKASHA…TVALTFQDPS (82 aa)) constitute a PDZ domain.

Belongs to the peptidase S1C family. Homotrimer. Interacts with numerous proteins, including the 35 kDa antigen PspA.

Its subcellular location is the cell inner membrane. It is found in the secreted. The protein localises to the cell wall. The catalysed reaction is Acts on substrates that are at least partially unfolded. The cleavage site P1 residue is normally between a pair of hydrophobic residues, such as Val-|-Val.. Its activity is regulated as follows. Probably regulates its own activity by autocleavage, which removes the PDZ domain. Inhibited by the serine protease inhibitor diisopropylfluorophosphate (DFP). Inhibited by fluoroquinolone such as ciprofloxacin, moxifloxacin and ofloxacin and their analogs. Functionally, required for virulence. Acts both as a protease, which degrades and/or refolds damaged substrate targets, and as a chaperone. Plays an important role in the stress response network mediated through the two-component regulatory system MprAB and SigE signaling networks. May utilize its PDZ domain to recognize and process misfolded proteins at the cell membrane, leading to activation of the MprAB and SigE signaling pathways and subsequent establishment of a positive feedback loop that facilitates bacterial adaptation. Interacts with and potentially cleaves several proteins, including the 35 kDa antigen PspA. Proteolytic cleavage of PspA may help to maintain cell envelope homeostasis in Mycobacterium and regulate specific stress response pathways during periods of extracytoplasmic stress. In vitro, exhibits proteolytic activity against the artificial substrate beta-casein. In Mycobacterium tuberculosis (strain ATCC 25618 / H37Rv), this protein is Serine protease PepD.